The primary structure comprises 145 residues: MIALIQRVTRASVTVEDEVTGEIGPGLLVLLGVEKDDDEQKANRLCERVLGYRIFSDADGKMNLNVQQAGGSVLVVSQFTLAADTDRGMRPGFSKGAAPDRAEALYDYFVERCRQQEMNTQTGRFAADMQVSLVNDGPVTFWLQV.

Residues 137–138 carry the Gly-cisPro motif, important for rejection of L-amino acids motif; it reads GP.

Belongs to the DTD family. Homodimer.

Its subcellular location is the cytoplasm. The enzyme catalyses glycyl-tRNA(Ala) + H2O = tRNA(Ala) + glycine + H(+). The catalysed reaction is a D-aminoacyl-tRNA + H2O = a tRNA + a D-alpha-amino acid + H(+). In terms of biological role, an aminoacyl-tRNA editing enzyme that deacylates mischarged D-aminoacyl-tRNAs. Also deacylates mischarged glycyl-tRNA(Ala), protecting cells against glycine mischarging by AlaRS. Acts via tRNA-based rather than protein-based catalysis; rejects L-amino acids rather than detecting D-amino acids in the active site. By recycling D-aminoacyl-tRNA to D-amino acids and free tRNA molecules, this enzyme counteracts the toxicity associated with the formation of D-aminoacyl-tRNA entities in vivo and helps enforce protein L-homochirality. The protein is D-aminoacyl-tRNA deacylase of Enterobacter sp. (strain 638).